The chain runs to 413 residues: Gamma-glutamyl phosphate reductase (413 aa).

This sequence belongs to the gamma-glutamyl phosphate reductase family.

The protein localises to the cytoplasm. The enzyme catalyses L-glutamate 5-semialdehyde + phosphate + NADP(+) = L-glutamyl 5-phosphate + NADPH + H(+). It functions in the pathway amino-acid biosynthesis; L-proline biosynthesis; L-glutamate 5-semialdehyde from L-glutamate: step 2/2. Its function is as follows. Catalyzes the NADPH-dependent reduction of L-glutamate 5-phosphate into L-glutamate 5-semialdehyde and phosphate. The product spontaneously undergoes cyclization to form 1-pyrroline-5-carboxylate. The sequence is that of Gamma-glutamyl phosphate reductase from Geobacillus sp. (strain WCH70).